We begin with the raw amino-acid sequence, 226 residues long: Orotidine 5'-phosphate decarboxylase (226 aa).

Substrate is bound by residues D9, K31, 58–67 (DLKLYDIPNT), T115, R176, Q184, G204, and R205. The active-site Proton donor is K60.

The protein belongs to the OMP decarboxylase family. Type 1 subfamily. Homodimer.

The catalysed reaction is orotidine 5'-phosphate + H(+) = UMP + CO2. The protein operates within pyrimidine metabolism; UMP biosynthesis via de novo pathway; UMP from orotate: step 2/2. In terms of biological role, catalyzes the decarboxylation of orotidine 5'-monophosphate (OMP) to uridine 5'-monophosphate (UMP). This is Orotidine 5'-phosphate decarboxylase from Wolbachia pipientis subsp. Culex pipiens (strain wPip).